We begin with the raw amino-acid sequence, 257 residues long: 3-alpha-hydroxysteroid dehydrogenase/carbonyl reductase (257 aa).

NAD(+) contacts are provided by residues 8–13 (GCATGI), D32, 41–42 (DL), and G71. S114 serves as a coordination point for substrate. NAD(+) is bound by residues Y155 and K159. Y155 (proton acceptor) is an active-site residue.

Belongs to the short-chain dehydrogenases/reductases (SDR) family. In terms of assembly, homodimer.

The protein resides in the cytoplasm. The enzyme catalyses a 3alpha-hydroxysteroid + NADP(+) = a 3-oxosteroid + NADPH + H(+). The catalysed reaction is a 3alpha-hydroxysteroid + NAD(+) = a 3-oxosteroid + NADH + H(+). In terms of biological role, catalyzes the reversible interconversion of hydroxy and oxo groups at position 3 of the steroid nucleus. Along with the 3 alpha-hydroxysteroid dehydrogenase and 3-oxo-reductase activities towards a variety of cis or trans fused A/B ring steroids, it also reduces several xenobiotic carbonyl compounds, including a metyrapone-based class of insecticides, to the respective alcohol metabolites. No detectable activity on testosterone, progesterone or 3-oxo-desogestrel. This Comamonas testosteroni (Pseudomonas testosteroni) protein is 3-alpha-hydroxysteroid dehydrogenase/carbonyl reductase (hsdA).